The chain runs to 239 residues: Isoprenyl transferase (239 aa).

Aspartate 16 is a catalytic residue. Residue aspartate 16 participates in Mg(2+) binding. Residues 17–20 (GNGR), tryptophan 21, arginine 29, histidine 33, and 61–63 (STE) contribute to the substrate site. Residue asparagine 64 is the Proton acceptor of the active site. Substrate-binding positions include tryptophan 65, arginine 67, arginine 187, and 193-195 (RLS). Glutamate 206 contributes to the Mg(2+) binding site.

It belongs to the UPP synthase family. In terms of assembly, homodimer. Mg(2+) serves as cofactor.

In terms of biological role, catalyzes the condensation of isopentenyl diphosphate (IPP) with allylic pyrophosphates generating different type of terpenoids. The protein is Isoprenyl transferase of Lactobacillus johnsonii (strain CNCM I-12250 / La1 / NCC 533).